We begin with the raw amino-acid sequence, 199 residues long: Probable GTP-binding protein EngB (199 aa).

An EngB-type G domain is found at 28 to 199 (DLPEIALAGR…DSWDAILEQV (172 aa)). Residues 36-43 (GRSNVGKS), 63-67 (GKTQL), 81-84 (DVPG), 148-151 (TKAD), and 180-182 (FSS) each bind GTP. Serine 43 and threonine 65 together coordinate Mg(2+).

It belongs to the TRAFAC class TrmE-Era-EngA-EngB-Septin-like GTPase superfamily. EngB GTPase family. Mg(2+) is required as a cofactor.

Its function is as follows. Necessary for normal cell division and for the maintenance of normal septation. The protein is Probable GTP-binding protein EngB of Streptococcus pyogenes serotype M18 (strain MGAS8232).